The chain runs to 294 residues: Probable ABC transporter permease protein YqgI (294 aa).

6 consecutive transmembrane segments (helical) span residues 14–34 (FGLC…YIII), 66–86 (FYIL…GGVF), 99–121 (FIRT…FGLL), 126–148 (LTGW…LPVM), 190–210 (IITG…ALLF), and 260–280 (AIAN…NLAA). In terms of domain architecture, ABC transmembrane type-1 spans 62-280 (LFNSFYILFI…ISVLVFNLAA (219 aa)).

It belongs to the binding-protein-dependent transport system permease family. CysTW subfamily.

It is found in the cell membrane. Functionally, part of the binding-protein-dependent transport system YqgGHIJK. Probably responsible for the translocation of the substrate across the membrane. The polypeptide is Probable ABC transporter permease protein YqgI (yqgI) (Bacillus subtilis (strain 168)).